The primary structure comprises 194 residues: MKLLFDFFPIILFFVVYKTTNDIVTATAALIPATAAQVAFSWFKYRKVEKMHLFALVIVVILGGATILFKDDTFIKWKPSVVCWLLAVVFLIGGWVSKKNLYQRMMEANISLPQHAWSKLNYSWVIFNTLLGALNLYVAYHYTQEQWVNFKLFGMLGLSLVFALMQGVYISRHMVEDEPAPSESATGNGDNKSF.

Transmembrane regions (helical) follow at residues methionine 1–asparagine 21, glutamate 49–phenylalanine 69, tryptophan 77–serine 97, leucine 120–tyrosine 140, and phenylalanine 150–isoleucine 170.

Belongs to the YciB family.

Its subcellular location is the cell inner membrane. Functionally, plays a role in cell envelope biogenesis, maintenance of cell envelope integrity and membrane homeostasis. The chain is Inner membrane-spanning protein YciB from Hahella chejuensis (strain KCTC 2396).